A 382-amino-acid chain; its full sequence is Homoserine O-acetyltransferase (382 aa).

The tract at residues 1–20 (MSTDQSPCPSATGAELLPPP) is disordered. An AB hydrolase-1 domain is found at 59-363 (NVVLVEHALT…RDGHDGFLTE (305 aa)). The active-site Nucleophile is serine 164. Substrate is bound at residue arginine 234. Catalysis depends on residues aspartate 327 and histidine 357. Residue aspartate 358 participates in substrate binding.

The protein belongs to the AB hydrolase superfamily. MetX family. Homodimer.

It localises to the cytoplasm. The catalysed reaction is L-homoserine + acetyl-CoA = O-acetyl-L-homoserine + CoA. It functions in the pathway amino-acid biosynthesis; L-methionine biosynthesis via de novo pathway; O-acetyl-L-homoserine from L-homoserine: step 1/1. In terms of biological role, transfers an acetyl group from acetyl-CoA to L-homoserine, forming acetyl-L-homoserine. The polypeptide is Homoserine O-acetyltransferase (Nocardia farcinica (strain IFM 10152)).